We begin with the raw amino-acid sequence, 272 residues long: uncharacterized protein (272 aa).

2 consecutive transmembrane segments (helical) span residues 9–29 (GGDIIFLMFTTLAAVSTASEH) and 252–272 (SHISFLVPFFSVILVSLISFI).

The protein resides in the membrane. This is an uncharacterized protein from Caenorhabditis elegans.